The chain runs to 236 residues: Small ribosomal subunit protein uS2c (236 aa).

Belongs to the universal ribosomal protein uS2 family.

It localises to the plastid. The protein localises to the chloroplast. The sequence is that of Small ribosomal subunit protein uS2c (rps2) from Aethionema grandiflorum (Persian stone-cress).